The primary structure comprises 441 residues: Ribosomal protein uS12 methylthiotransferase RimO (441 aa).

Residues 5 to 116 (PTIAFTHLGC…IVDVMQRVEK (112 aa)) form the MTTase N-terminal domain. [4Fe-4S] cluster is bound by residues C14, C50, C79, C154, C158, and C161. Residues 140-370 (TTSEGVAYVR…EVQQSISWQQ (231 aa)) form the Radical SAM core domain. The TRAM domain occupies 372–438 (QKLVGQLVDV…IYDLYGCLIS (67 aa)).

The protein belongs to the methylthiotransferase family. RimO subfamily. It depends on [4Fe-4S] cluster as a cofactor.

It is found in the cytoplasm. The enzyme catalyses L-aspartate(89)-[ribosomal protein uS12]-hydrogen + (sulfur carrier)-SH + AH2 + 2 S-adenosyl-L-methionine = 3-methylsulfanyl-L-aspartate(89)-[ribosomal protein uS12]-hydrogen + (sulfur carrier)-H + 5'-deoxyadenosine + L-methionine + A + S-adenosyl-L-homocysteine + 2 H(+). Its function is as follows. Catalyzes the methylthiolation of an aspartic acid residue of ribosomal protein uS12. The polypeptide is Ribosomal protein uS12 methylthiotransferase RimO (Trichodesmium erythraeum (strain IMS101)).